The chain runs to 292 residues: Ribosomal protein L11 methyltransferase (292 aa).

4 residues coordinate S-adenosyl-L-methionine: threonine 144, glycine 165, aspartate 187, and asparagine 229.

Belongs to the methyltransferase superfamily. PrmA family.

The protein localises to the cytoplasm. It carries out the reaction L-lysyl-[protein] + 3 S-adenosyl-L-methionine = N(6),N(6),N(6)-trimethyl-L-lysyl-[protein] + 3 S-adenosyl-L-homocysteine + 3 H(+). In terms of biological role, methylates ribosomal protein L11. This is Ribosomal protein L11 methyltransferase from Pseudomonas putida (strain ATCC 47054 / DSM 6125 / CFBP 8728 / NCIMB 11950 / KT2440).